The sequence spans 373 residues: Nuclear migration protein JNM1 (373 aa).

Residues 33–53 (EVKEDGQQEEQEEASSRKDGL) form a disordered region. Serine 91 carries the post-translational modification Phosphoserine. Coiled coils occupy residues 114-139 (KIENLTSEMQTEIKELCEIQSKLATE), 200-245 (EDRK…EFEN), and 331-367 (WLKALNELDKKFDEQEVKIRENMEQIRRKIDTLEDEA).

As to quaternary structure, component of the dynactin complex composed of at least ARP1, JNM1, NIP100 and ARP10. Dynactin comprises a short rod of ARP1 polymers attached to ARP10 at its pointed-end and probably associated with the capping protein at its barbed-end. The rod structure is implicated in dynein cargo binding. A sidearm formed by NIP100 projects from the ARP1 filament and is implicated in motor binding. Interacts with ARP1.

It localises to the cytoplasm. The protein resides in the cytoskeleton. Its function is as follows. Component of the dynactin complex which assists cytoplasmic dynein by increasing its processivity and by regulation of its cargo binding. The dynactin complex is required for the spindle translocation late in anaphase and is involved in a cell wall synthesis checkpoint. JNM1 is associated with the rod and links it to the projecting sidearm. Required for proper nuclear migration during the mitotic cell cycle and for astral microtubule development. In Saccharomyces cerevisiae (strain ATCC 204508 / S288c) (Baker's yeast), this protein is Nuclear migration protein JNM1 (JNM1).